We begin with the raw amino-acid sequence, 73 residues long: Large ribosomal subunit protein bL31 (73 aa).

Belongs to the bacterial ribosomal protein bL31 family. Type A subfamily. Part of the 50S ribosomal subunit.

Binds the 23S rRNA. This chain is Large ribosomal subunit protein bL31, found in Cereibacter sphaeroides (strain ATCC 17025 / ATH 2.4.3) (Rhodobacter sphaeroides).